A 237-amino-acid chain; its full sequence is UPF0173 metal-dependent hydrolase HQ_3368A (237 aa).

The protein belongs to the UPF0173 family.

The sequence is that of UPF0173 metal-dependent hydrolase HQ_3368A from Haloquadratum walsbyi (strain DSM 16790 / HBSQ001).